Here is a 343-residue protein sequence, read N- to C-terminus: Leucine-rich repeat-containing protein 23 (343 aa).

Acidic residues predominate over residues 1 to 30 (MSDEDDLEDSEPDQDDSEKEEDEKETEEGE). The interval 1–47 (MSDEDDLEDSEPDQDDSEKEEDEKETEEGEDYRKEGEEFPEEWLPTP) is disordered. 8 LRR repeats span residues 92–113 (HLRYVDISENHLTDLSPLNYLT), 114–134 (HLLWLKADGNRLRSAQMNELP), 135–155 (YLQIASFAYNQITDTEGISHP), 156–177 (RLETLNLKGNSIHMVTGLDPEK), 180–200 (SLHTVELRGNQLESTLGINLP), 201–222 (KLKNLYLAQNMLKKVEGLEDLS), 223–244 (NLTTLHLRDNQIDTLSGFSREM), and 246–267 (SLQYLNLRGNMVANLGELAKLR). Positions 208–343 (AQNMLKKVEG…RDLEPEQSLI (136 aa)) are interaction with RSPH9. Positions 280-318 (NPCTDETSYRQEALVQMPYLERLDKEFYEEEERAEADVI) constitute an LRRCT domain. Residues 307–329 (YEEEERAEADVIRQRLKEEKEQE) are a coiled coil. A compositionally biased stretch (basic and acidic residues) spans 318–337 (IRQRLKEEKEQEPEPQRDLE). Positions 318-343 (IRQRLKEEKEQEPEPQRDLEPEQSLI) are disordered.

As to quaternary structure, component of the axonemal radial spoke complex. Interacts with RSPH3. Interacts with RSPH9. As to expression, expressed in spermatozoa.

It is found in the cell projection. It localises to the cilium. The protein resides in the flagellum. Its subcellular location is the cytoplasm. The protein localises to the cytoskeleton. It is found in the flagellum axoneme. In terms of biological role, essential for sperm motility and male fertility. Plays an important role in the proper assembly of the third radial spoke (RS3) head and the bridge structure between RS2 and RS3 in the sperm flagella. The sequence is that of Leucine-rich repeat-containing protein 23 (LRRC23) from Homo sapiens (Human).